The primary structure comprises 351 residues: Tsukushi-A (351 aa).

Positions methionine 1 to glycine 17 are cleaved as a signal peptide. 9 LRR repeats span residues proline 59–glycine 82, tyrosine 85–lysine 108, leucine 109–tyrosine 132, arginine 134–leucine 155, glutamine 158–proline 181, valine 182–glycine 203, isoleucine 204–glycine 226, leucine 252–glycine 276, and leucine 277–histidine 300.

In terms of assembly, interacts with bmp4. Interacts with dll1 (via extracellular region). Interacts with fgf8; inhibits fgf8 signaling. Interacts with nodal2/Xnr2; enhances nodal2 activity. During embryogenesis, localized to the animal hemisphere during late blastula and gastrula stages. At stage 10, expression is also detected around the dorsal blastopore lip. Expressed in the mandibular crest segment, branchial crest segment and differentiating somites at stage 21/22. Expressed in the germ ring including the shield at shield stage and in the tailbud at the 10-somite stage. At the early neurula stage (stage 13), expression is hardly detectable in the presumptive neural plate region, and restricted to the non-neural ectoderm where its levels increase by stage 14, especially in the presumptive anterior neural fold. Also expressed in the prospective cranial neural crest. At the early tailbud stage (stage 23), expressed in cranial neural crest cells, the dorsal retina and the lens placode.

The protein localises to the secreted. Functionally, contributes to various developmental events through its interactions with multiple signaling pathways. Dorsalizing factor which functions as an inhibitor of bone morphogenetic proteins (BMP) during gastrulation. Promotes dll1-dependent activation of Notch signaling and is required for neural crest formation. Induces endoderm and dorsal mesoderm formation by enhancing nodal2/Xnr2 activity while inhibiting ventrolateral mesoderm formation through inhibition of fgf8. In Xenopus laevis (African clawed frog), this protein is Tsukushi-A.